The following is a 720-amino-acid chain: MPPPSDIVKVAIEWPGANAQLLEIDQKRPLASIIKEVCDGWSLPNPEYYTLRYADGPQLYITEQTRSDIKNGTILQLAISPSRAARQLMERTQSSNMETRLDAMKELAKLSADVTFATEFINMDGIIVLTRLVESGTKLLSHYSEMLAFTLTAFLELMDHGIVSWDMVSITFIKQIAGYVSQPMVDVSILQRSLAILESMVLNSQSLYQKIAEEITVGQLISHLQVSNQEIQTYAIALINALFLKAPEDKRQDMANAFAQKHLRSIILNHVIRGNRPIKTEMAHQLYVLQVLTFNLLEERMMTKMDPNDQAQRDIIFELRRIAFDAESDPSNAPGSGTEKRKAMYTKDYKMLGFTNHINPAMDFTQTPPGMLALDNMLYLAKVHQDTYIRIVLENSSREDKHECPFGRSAIELTKMLCEILQVGELPNEGRNDYHPMFFTHDRAFEELFGICIQLLNKTWKEMRATAEDFNKVMQVVREQITRALPSKPNSLDQFKSKLRSLSYSEILRLRQSERMSQDDFQSPPIVELREKIQPEILELIKQQRLNRLCEGSSFRKIGNRRRQERFWYCRLALNHKVLHYGDLDDNPQGEVTFESLQEKIPVADIKAIVTGKDCPHMKEKSALKQNKEVLELAFSILYDPDETLNFIAPNKYEYCIWIDGLSALLGKDMSSELTKSDLDTLLSMEMKLRLLDLENIQIPEAPPPIPKEPSSYDFVYHYG.

Residue Tyr-48 is modified to Phosphotyrosine. In terms of domain architecture, ELMO spans 311–485; that stretch reads AQRDIIFELR…VVREQITRAL (175 aa). Ser-503 carries the post-translational modification Phosphoserine. The region spanning 553–674 is the PH domain; sequence SSFRKIGNRR…LLGKDMSSEL (122 aa). An SH3-binding motif is present at residues 700–707; that stretch reads PEAPPPIP. Tyr-717 carries the post-translational modification Phosphotyrosine.

As to quaternary structure, interacts with the SH3-domain of DOCK1 via its SH3-binding site. Probably part of a complex with DOCK1 and RAC1. Probably part of a complex with DOCK1 and CRK isoform CRK-II. Interacts with ARHGEF16, DOCK4 and EPHA2; mediates activation of RAC1 by EPHA2. Interacts with ADGRB3. Interacts with AUTS2; the interaction is direct. Widely expressed, with a higher expression in skeletal muscle, kidney and placenta.

The protein resides in the cytoplasm. It is found in the cytosol. The protein localises to the membrane. Functionally, involved in cytoskeletal rearrangements required for phagocytosis of apoptotic cells and cell motility. Acts in association with DOCK1 and CRK. Was initially proposed to be required in complex with DOCK1 to activate Rac Rho small GTPases. May enhance the guanine nucleotide exchange factor (GEF) activity of DOCK1. This is Engulfment and cell motility protein 2 (ELMO2) from Homo sapiens (Human).